The chain runs to 100 residues: Small ribosomal subunit protein uS14m (100 aa).

The protein belongs to the universal ribosomal protein uS14 family.

It is found in the mitochondrion. The sequence is that of Small ribosomal subunit protein uS14m (RPS14) from Vicia faba (Broad bean).